A 622-amino-acid chain; its full sequence is Chaperone protein HscA homolog (622 aa).

It belongs to the heat shock protein 70 family.

Its function is as follows. Chaperone involved in the maturation of iron-sulfur cluster-containing proteins. Has a low intrinsic ATPase activity which is markedly stimulated by HscB. The polypeptide is Chaperone protein HscA homolog (Burkholderia mallei (strain NCTC 10247)).